Reading from the N-terminus, the 22-residue chain is thr operon leader peptide (22 aa).

This sequence belongs to the thr operon leader peptide family.

In terms of biological role, this protein is involved in control of the biosynthesis of threonine. The protein is thr operon leader peptide of Klebsiella pneumoniae (strain 342).